Here is a 773-residue protein sequence, read N- to C-terminus: 4'-phosphopantetheine phosphatase (773 aa).

Ala2 is subject to N-acetylalanine. A pantothenate kinase region spans residues 2-402; the sequence is AECGASGSGS…SPELGPAQRA (401 aa). Ser196 and Ser199 together coordinate acetyl-CoA. A 3'-nitrotyrosine modification is found at Tyr320. A phosphoserine mark is found at Ser393 and Ser404. The 4'-phosphopantetheine phosphatase stretch occupies residues 403 to 773; sequence RSGTFDLLEM…VIFKYEVPAE (371 aa). The residue at position 406 (Thr406) is a Phosphothreonine. Residues Asp623, Asn624, and Asp659 each coordinate Mn(2+). The short motif at 724 to 728 is the Subfamily II EGMGR motif element; sequence EGMGR.

This sequence in the N-terminal section; belongs to the type II pantothenate kinase family. The protein in the C-terminal section; belongs to the damage-control phosphatase family. Phosphopantetheine phosphatase II subfamily. Homodimer. Interacts with PKM. The cofactor is Mn(2+). It depends on Ni(2+) as a cofactor. In terms of tissue distribution, widely expressed with high expression in the muscle. Expressed in the retina and lens epithelium, mainly in ganglion cell layer, outer plexiform layer and retinal pigment layer (at protein level).

The protein localises to the cytoplasm. It carries out the reaction (R)-4'-phosphopantetheine + H2O = (R)-pantetheine + phosphate. The enzyme catalyses (R)-4'-phosphopantetheine sulfonate + H2O = (R)-pantetheine sulfonate + phosphate. It catalyses the reaction (R)-4'-phospho-S-sulfopantetheine + H2O = (R)-S-sulfopantetheine + phosphate. With respect to regulation, activity is strongly promoted by Co(2+), Ni(2+), Mg(2+) and Mn(2+). Activity is inhibited by EDTA. Phosphatase which shows a preference for 4'-phosphopantetheine and its oxidatively damaged forms (sulfonate or S-sulfonate), providing strong indirect evidence that the phosphatase activity pre-empts damage in the coenzyme A (CoA) pathway. Hydrolyzing excess 4'-phosphopantetheine could constitute a directed overflow mechanism to prevent its oxidation to the S-sulfonate, sulfonate, or other forms. Hydrolyzing 4'-phosphopantetheine sulfonate or S-sulfonate would forestall their conversion to inactive forms of CoA and acyl carrier protein. May play a role in the physiological regulation of CoA intracellular levels. The polypeptide is 4'-phosphopantetheine phosphatase (Homo sapiens (Human)).